The primary structure comprises 103 residues: UPF0102 protein aq_041 (103 aa).

Belongs to the UPF0102 family.

The chain is UPF0102 protein aq_041 from Aquifex aeolicus (strain VF5).